Reading from the N-terminus, the 223-residue chain is MDKQNVPVITLDGPSASGKGTIARLVSQALGFHYLDSGALYRLVALAAMKRNTDVSDEHSMVDIARHLNVSFRDSSIWLEGKDVSDEVRAEACGEYASRIAQYSALRVELLGYQRDFRKSPGLVTDGRDMGSVIFPDATLKIYLTASEEERALRRHKQLMEKGINASIADLIQALRARDERDSSRSTSPLQQCEDACLLDTTGLSIDQVVSRVLNMYAEARKA.

13–21 (GPSASGKGT) contributes to the ATP binding site.

The protein belongs to the cytidylate kinase family. Type 1 subfamily.

The protein resides in the cytoplasm. The catalysed reaction is CMP + ATP = CDP + ADP. It catalyses the reaction dCMP + ATP = dCDP + ADP. The sequence is that of Cytidylate kinase from Nitrosomonas europaea (strain ATCC 19718 / CIP 103999 / KCTC 2705 / NBRC 14298).